A 161-amino-acid polypeptide reads, in one-letter code: Periplasmic chaperone Spy (161 aa).

The first 23 residues, 1-23, serve as a signal peptide directing secretion; the sequence is MRKLTALFVASTLALGAANLAHA. The segment at 140–161 is disordered; it reads ANFEKRLTERPAAKGKMPATAE. The segment covering 142–151 has biased composition (basic and acidic residues); the sequence is FEKRLTERPA.

This sequence belongs to the CpxP/Spy family. Homodimer.

Its subcellular location is the periplasm. An ATP-independent periplasmic chaperone, decreases protein aggregation and helps protein refolding. Binds substrate over a large region of its convex inner surface. Substrate protein folds while it is bound to chaperone. Increasing Spy flexibility increases its substrate affinity and overall chaperone activity (shown for 3 different substrates). Protects proteins in vitro against tannin inactivation; tannins have antimicrobial activity. Overexpression enhances the stability of otherwise unstable periplasmic proteins. This Escherichia coli (strain K12) protein is Periplasmic chaperone Spy.